A 302-amino-acid polypeptide reads, in one-letter code: MSIKHFLTLQDFSPAELKQLMLRAIELKKIQKSGEIFEPLKNKTLAMIFEKSSTRTRISFEIGMSQLGGHALFLSPRDTQLGRGEPIEDTAKVISSMADGIMIRTFGHEVVEKMAEHSQVPVINALTDDYHPCQLLADMQTYYEHRGSIEGKTVLWVGDGNNMCHSYINAAKQYGFKLRISAPEDYDPNPRIVEANQEYVEMIRNPMDAAENVDLIVTDVWASMGQEEEQKKREKAFKDYQVNTAMMQQANPDALFMHCLPAHRGEEVSAEVMDAEDSVVWDEAENRLHAQKALLEYLMAKA.

Carbamoyl phosphate is bound by residues 53 to 56, Gln80, Arg104, and 131 to 134; these read STRT and HPCQ. L-ornithine-binding positions include Asn162, Asp219, and 223–224; that span reads SM. Residues 259-260 and Arg287 contribute to the carbamoyl phosphate site; that span reads CL.

The protein belongs to the aspartate/ornithine carbamoyltransferase superfamily. OTCase family.

Its subcellular location is the cytoplasm. The catalysed reaction is carbamoyl phosphate + L-ornithine = L-citrulline + phosphate + H(+). Its pathway is amino-acid biosynthesis; L-arginine biosynthesis; L-arginine from L-ornithine and carbamoyl phosphate: step 1/3. Reversibly catalyzes the transfer of the carbamoyl group from carbamoyl phosphate (CP) to the N(epsilon) atom of ornithine (ORN) to produce L-citrulline. The protein is Ornithine carbamoyltransferase of Hydrogenovibrio crunogenus (strain DSM 25203 / XCL-2) (Thiomicrospira crunogena).